Reading from the N-terminus, the 230-residue chain is CASP-like protein 2A2 (230 aa).

The interval 1 to 23 (MEKKDEGNPPMAVMGSRDENEDV) is disordered. Topologically, residues 1–29 (MEKKDEGNPPMAVMGSRDENEDVKSTMRT) are cytoplasmic. A helical transmembrane segment spans residues 30–50 (AETMLRLVPVALCVSALVVML). The Extracellular segment spans residues 51-71 (KNTQTNDYGSLSYSDLGAFRY). The chain crosses the membrane as a helical span at residues 72 to 92 (LVNANGICAGYSLLSAVIVAM). Over 93–100 (PRAWTMPQ) the chain is Cytoplasmic. The chain crosses the membrane as a helical span at residues 101 to 121 (AWTFFLLDQVLTYVILAAGTV). Residues 122-151 (STEVLYLANKGDTSIAWSAACASFGGFCHK) are Extracellular-facing. The chain crosses the membrane as a helical span at residues 152–172 (ALISTVITFVAVIFYAALSLV). Over 173-230 (SSYKLFSKYDAPVVTQSGEGIKTVTLGSPPPPPPPPPSNLHLHLHAKLACPAHNNSPN) the chain is Cytoplasmic.

This sequence belongs to the Casparian strip membrane proteins (CASP) family. Homodimer and heterodimers.

Its subcellular location is the cell membrane. This Populus trichocarpa (Western balsam poplar) protein is CASP-like protein 2A2.